We begin with the raw amino-acid sequence, 429 residues long: 5-methylthioadenosine/S-adenosylhomocysteine deaminase (429 aa).

2 residues coordinate Zn(2+): H66 and H68. Residues E95, R147, R158, and H181 each contribute to the substrate site. H208 provides a ligand contact to Zn(2+). Substrate contacts are provided by E211 and D296. Residue D296 participates in Zn(2+) binding.

It belongs to the metallo-dependent hydrolases superfamily. MTA/SAH deaminase family. Zn(2+) serves as cofactor.

It catalyses the reaction S-adenosyl-L-homocysteine + H2O + H(+) = S-inosyl-L-homocysteine + NH4(+). The enzyme catalyses S-methyl-5'-thioadenosine + H2O + H(+) = S-methyl-5'-thioinosine + NH4(+). Functionally, catalyzes the deamination of 5-methylthioadenosine and S-adenosyl-L-homocysteine into 5-methylthioinosine and S-inosyl-L-homocysteine, respectively. Is also able to deaminate adenosine. The chain is 5-methylthioadenosine/S-adenosylhomocysteine deaminase from Caldicellulosiruptor saccharolyticus (strain ATCC 43494 / DSM 8903 / Tp8T 6331).